The primary structure comprises 90 residues: Probable Fe(2+)-trafficking protein (90 aa).

Belongs to the Fe(2+)-trafficking protein family.

Could be a mediator in iron transactions between iron acquisition and iron-requiring processes, such as synthesis and/or repair of Fe-S clusters in biosynthetic enzymes. The polypeptide is Probable Fe(2+)-trafficking protein (Methylococcus capsulatus (strain ATCC 33009 / NCIMB 11132 / Bath)).